The sequence spans 81 residues: Photosystem I iron-sulfur center (81 aa).

4Fe-4S ferredoxin-type domains follow at residues 2–31 and 39–68; these read AHSV…MVPR and IASA…VRVY. The [4Fe-4S] cluster site is built by cysteine 11, cysteine 14, cysteine 17, cysteine 21, cysteine 48, cysteine 51, cysteine 54, and cysteine 58.

The eukaryotic PSI reaction center is composed of at least 11 subunits. The cofactor is [4Fe-4S] cluster.

The protein localises to the plastid. It is found in the chloroplast thylakoid membrane. The enzyme catalyses reduced [plastocyanin] + hnu + oxidized [2Fe-2S]-[ferredoxin] = oxidized [plastocyanin] + reduced [2Fe-2S]-[ferredoxin]. Its function is as follows. Apoprotein for the two 4Fe-4S centers FA and FB of photosystem I (PSI); essential for photochemical activity. FB is the terminal electron acceptor of PSI, donating electrons to ferredoxin. The C-terminus interacts with PsaA/B/D and helps assemble the protein into the PSI complex. Required for binding of PsaD and PsaE to PSI. PSI is a plastocyanin/cytochrome c6-ferredoxin oxidoreductase, converting photonic excitation into a charge separation, which transfers an electron from the donor P700 chlorophyll pair to the spectroscopically characterized acceptors A0, A1, FX, FA and FB in turn. This chain is Photosystem I iron-sulfur center, found in Antithamnion sp. (Red alga).